Here is an 82-residue protein sequence, read N- to C-terminus: Putative defensin-like protein 134 (82 aa).

The N-terminal stretch at 1 to 26 (MEVRSLNLCFLLVLVLLMSPAPTAVA) is a signal peptide. 4 disulfide bridges follow: C32–C79, C42–C68, C47–C74, and C51–C76.

This sequence belongs to the DEFL family.

It localises to the secreted. This is Putative defensin-like protein 134 from Arabidopsis thaliana (Mouse-ear cress).